The following is a 947-amino-acid chain: Translation initiation factor IF-2 (947 aa).

A disordered region spans residues 47-332 (LRESFGGGKS…RGRKSKRAKR (286 aa)). Basic and acidic residues predominate over residues 86–95 (APDRSLDAAL). The span at 105 to 123 (APVPAPAPAPTPAPAPAPA) shows a compositional bias: pro residues. The segment covering 131 to 145 (APPAATPAAPAASAA) has biased composition (low complexity). Composition is skewed to pro residues over residues 146–171 (PAPP…PQAP) and 210–225 (PRPQ…PGAP). The segment covering 255–318 (RPGGGRPGGP…GAAGAFGRPG (64 aa)) has biased composition (gly residues). Positions 322–331 (RRGRKSKRAK) are enriched in basic residues. One can recognise a tr-type G domain in the interval 443-614 (TRPPVVTVMG…AVLLTADAAL (172 aa)). The segment at 452-459 (GHVDHGKT) is G1. 452–459 (GHVDHGKT) provides a ligand contact to GTP. The interval 477–481 (GITQH) is G2. The interval 502–505 (DTPG) is G3. Residues 502 to 506 (DTPGH) and 556 to 559 (NKID) each bind GTP. The segment at 556–559 (NKID) is G4. The interval 592–594 (SAK) is G5.

It belongs to the TRAFAC class translation factor GTPase superfamily. Classic translation factor GTPase family. IF-2 subfamily.

It localises to the cytoplasm. Functionally, one of the essential components for the initiation of protein synthesis. Protects formylmethionyl-tRNA from spontaneous hydrolysis and promotes its binding to the 30S ribosomal subunits. Also involved in the hydrolysis of GTP during the formation of the 70S ribosomal complex. This Mycobacterium marinum (strain ATCC BAA-535 / M) protein is Translation initiation factor IF-2.